A 220-amino-acid polypeptide reads, in one-letter code: Small ribosomal subunit protein uS2 (220 aa).

The tract at residues 201 to 220 (LPPDGDLPEPPSEFEVKFKR) is disordered.

This sequence belongs to the universal ribosomal protein uS2 family.

The polypeptide is Small ribosomal subunit protein uS2 (Staphylothermus marinus (strain ATCC 43588 / DSM 3639 / JCM 9404 / F1)).